A 250-amino-acid polypeptide reads, in one-letter code: Tripartite motif-containing protein 74 (250 aa).

The RING-type zinc-finger motif lies at 16 to 57; it reads CPICLEVFKESLMLQCGHSYCKGCLVSLSYHLDTKVRCPMCW. A B box-type zinc finger spans residues 84–125; it reads PEPKVCVHHRNPLSLFCEKDQELICGLCGLLGSHQHHPVTPV. The Zn(2+) site is built by C89, H92, C111, and H117. Coiled coils occupy residues 125-169 and 204-235; these read VSTV…NESD and LVASLDMQLEQAQGTRERLAQAECVLEQFGNE.

This sequence belongs to the TRIM/RBCC family.

This is Tripartite motif-containing protein 74 (TRIM74) from Homo sapiens (Human).